The sequence spans 470 residues: Uronate isomerase (470 aa).

The protein belongs to the metallo-dependent hydrolases superfamily. Uronate isomerase family.

It catalyses the reaction D-glucuronate = D-fructuronate. It carries out the reaction aldehydo-D-galacturonate = keto-D-tagaturonate. It functions in the pathway carbohydrate metabolism; pentose and glucuronate interconversion. This chain is Uronate isomerase, found in Shigella boydii serotype 4 (strain Sb227).